Consider the following 196-residue polypeptide: Sulfur-rich protein (196 aa).

The next 3 helical transmembrane spans lie at 34 to 54 (VTAGLQAITSSPGMVNLLIGW), 76 to 96 (ITLLVLGILLVVAGLACMFIF), and 105 to 125 (FWLIIPAAIGLIKLLVTSLCF).

Its subcellular location is the membrane. The polypeptide is Sulfur-rich protein (srp) (Chlamydia pneumoniae (Chlamydophila pneumoniae)).